A 199-amino-acid chain; its full sequence is 7-methyl-GTP pyrophosphatase (199 aa).

Asp-73 (proton acceptor) is an active-site residue.

This sequence belongs to the Maf family. YceF subfamily. It depends on a divalent metal cation as a cofactor.

It is found in the cytoplasm. It catalyses the reaction N(7)-methyl-GTP + H2O = N(7)-methyl-GMP + diphosphate + H(+). Nucleoside triphosphate pyrophosphatase that hydrolyzes 7-methyl-GTP (m(7)GTP). May have a dual role in cell division arrest and in preventing the incorporation of modified nucleotides into cellular nucleic acids. The chain is 7-methyl-GTP pyrophosphatase from Bordetella bronchiseptica (strain ATCC BAA-588 / NCTC 13252 / RB50) (Alcaligenes bronchisepticus).